Reading from the N-terminus, the 301-residue chain is 33 kDa chaperonin (301 aa).

2 disulfides stabilise this stretch: Cys-239–Cys-241 and Cys-272–Cys-275.

It belongs to the HSP33 family. Post-translationally, under oxidizing conditions two disulfide bonds are formed involving the reactive cysteines. Under reducing conditions zinc is bound to the reactive cysteines and the protein is inactive.

It localises to the cytoplasm. Functionally, redox regulated molecular chaperone. Protects both thermally unfolding and oxidatively damaged proteins from irreversible aggregation. Plays an important role in the bacterial defense system toward oxidative stress. The sequence is that of 33 kDa chaperonin from Trichormus variabilis (strain ATCC 29413 / PCC 7937) (Anabaena variabilis).